Consider the following 161-residue polypeptide: Large ribosomal subunit protein uL30m (161 aa).

The transit peptide at 1-34 (MAGILRLVVQRPPGGLQTVTKGVESLIGTDWIRH) directs the protein to the mitochondrion.

It belongs to the universal ribosomal protein uL30 family. Component of the mitochondrial ribosome large subunit (39S) which comprises a 16S rRNA and about 50 distinct proteins.

Its subcellular location is the mitochondrion. This Macaca fascicularis (Crab-eating macaque) protein is Large ribosomal subunit protein uL30m (MRPL30).